The primary structure comprises 248 residues: Large ribosomal subunit protein uL29m (248 aa).

Disordered stretches follow at residues 77–107 and 223–248; these read VSKYPLPRPVKPKEQEKRPSNPKHGLWGFFG and AYEPPALDVEEPKGEASDSVKTPPSS.

The protein belongs to the universal ribosomal protein uL29 family. As to quaternary structure, component of the mitochondrial large ribosomal subunit. Mature mitochondrial ribosomes consist of a small (37S) and a large (54S) subunit. The 37S subunit contains at least 33 different proteins and 1 molecule of RNA (15S). The 54S subunit contains at least 45 different proteins and 1 molecule of RNA (21S).

It is found in the mitochondrion. The protein is Large ribosomal subunit protein uL29m (MRPL4) of Ajellomyces capsulatus (strain NAm1 / WU24) (Darling's disease fungus).